A 379-amino-acid chain; its full sequence is 3-isopropylmalate dehydrogenase 1 (379 aa).

Substrate is bound by residues R101, R111, R139, and D230. The Mg(2+) site is built by D230, D254, and D258. An NAD(+)-binding site is contributed by 293–305 (GSAPDIAGKGIAN).

It belongs to the isocitrate and isopropylmalate dehydrogenases family. LeuB type 1 subfamily. As to quaternary structure, homodimer. It depends on Mg(2+) as a cofactor. Mn(2+) serves as cofactor.

It is found in the cytoplasm. The catalysed reaction is (2R,3S)-3-isopropylmalate + NAD(+) = 4-methyl-2-oxopentanoate + CO2 + NADH. It functions in the pathway amino-acid biosynthesis; L-leucine biosynthesis; L-leucine from 3-methyl-2-oxobutanoate: step 3/4. Functionally, catalyzes the oxidation of 3-carboxy-2-hydroxy-4-methylpentanoate (3-isopropylmalate) to 3-carboxy-4-methyl-2-oxopentanoate. The product decarboxylates to 4-methyl-2 oxopentanoate. This is 3-isopropylmalate dehydrogenase 1 from Bradyrhizobium diazoefficiens (strain JCM 10833 / BCRC 13528 / IAM 13628 / NBRC 14792 / USDA 110).